Consider the following 639-residue polypeptide: UvrABC system protein C (639 aa).

One can recognise a GIY-YIG domain in the interval 20–97; sequence ERSGVYRMFD…IKKFQPKFNI (78 aa). The region spanning 207–242 is the UVR domain; that stretch reads KELQENLSRKMEELSSQMRFEEAAEIRDRIKALSYV.

This sequence belongs to the UvrC family. In terms of assembly, interacts with UvrB in an incision complex.

The protein localises to the cytoplasm. Functionally, the UvrABC repair system catalyzes the recognition and processing of DNA lesions. UvrC both incises the 5' and 3' sides of the lesion. The N-terminal half is responsible for the 3' incision and the C-terminal half is responsible for the 5' incision. This is UvrABC system protein C from Rickettsia conorii (strain ATCC VR-613 / Malish 7).